Reading from the N-terminus, the 318-residue chain is MADTPVPIFNLAALREGADQEKFRECVTGMGVFYLTGYGAGDKDHRLATDTAMDFFANGTEAEKAAVTTDVPTMRRGYSALEAESTAQVTRTGSYTDYSMSFSMGISGNVFPSPEFERVWTEYFDKLYAAAQETARLVLTASGGYDAEIVGSLDELLDADPVLRLRYFPEVPEHRSAEHEPRRMAPHYDLSIITFIHQTPCANGFVSLQAEIGGELVSLPVVEDAVVVMCGAMAPLATQGALPAPRHHVRSPGAGMREGSDRTSSVFFLRPTTDFSFSVAKARSYGLAVDLDMETATFGDWIGTNYVTMHAKNEPQAG.

In terms of domain architecture, Fe2OG dioxygenase spans 158–271 (DADPVLRLRY…RTSSVFFLRP (114 aa)).

It belongs to the iron/ascorbate-dependent oxidoreductase family. In terms of assembly, monomer. Fe cation is required as a cofactor.

It catalyses the reaction deacetoxycephalosporin C + 2-oxoglutarate + O2 = deacetylcephalosporin C + succinate + CO2. The protein operates within antibiotic biosynthesis; cephalosporin C biosynthesis. Functionally, hydroxylation of desacetoxicephalosporin C in 3'position to form deacetylcephalosporin C. The protein is Deacetoxycephalosporin C hydroxylase (cefF) of Streptomyces clavuligerus.